The chain runs to 1108 residues: Valine--tRNA ligase, mitochondrial 1 (1108 aa).

Residues 1 to 46 (MSLLFLRRAKPLFVSCCSATHSRSSFLSPTLTNQLVRSFHGSRTMS) constitute a mitochondrion transit peptide. Basic and acidic residues predominate over residues 57 to 93 (ELERKKKKEEKAKEKELKKQKALEKERLAELKAKQAK). The tract at residues 57 to 138 (ELERKKKKEE…RKRLSSQMAK (82 aa)) is disordered. Residues 177 to 187 (PNVTGALHIGH) carry the 'HIGH' region motif. The 'KMSKS' region motif lies at 695–699 (KMSKS). Position 698 (lysine 698) interacts with ATP. A coiled-coil region spans residues 1032–1064 (AINTEAEQEKIRNKIGELQKQKEKLQKMMSVST).

This sequence belongs to the class-I aminoacyl-tRNA synthetase family.

It is found in the mitochondrion. The protein resides in the cytoplasm. Its subcellular location is the cytosol. The catalysed reaction is tRNA(Val) + L-valine + ATP = L-valyl-tRNA(Val) + AMP + diphosphate. Required for embryo development and seed viability. The protein is Valine--tRNA ligase, mitochondrial 1 of Arabidopsis thaliana (Mouse-ear cress).